We begin with the raw amino-acid sequence, 72 residues long: LITAF domain-containing protein (72 aa).

Residues 1–71 (MPVQAVCPYC…CQRELFYYHR (71 aa)) enclose the LITAF domain. C7 and C10 together coordinate Zn(2+). Residues 22–45 (PGALTWLLCTTLFLFGYVLGCCFL) form a membrane-binding amphipathic helix region. C59 and C62 together coordinate Zn(2+).

The protein belongs to the CDIP1/LITAF family.

It localises to the membrane. This Homo sapiens (Human) protein is LITAF domain-containing protein.